A 532-amino-acid polypeptide reads, in one-letter code: Zinc finger protein 350 (532 aa).

The 72-residue stretch at 8 to 79 (ITLEDVAVDF…EDGIHSGACS (72 aa)) folds into the KRAB domain. C2H2-type zinc fingers lie at residues 206–228 (HVCS…QVMH), 234–256 (HRCS…QRTH), 262–284 (YECP…QKTH), 290–312 (YICS…QRIH), 318–340 (YICN…QRFH), 346–368 (FVCS…QRIH), 374–396 (FECS…QRTH), and 402–424 (YGCN…KRIH). Residues 427-443 (EKQEAAKVENPPAERHS) are compositionally biased toward basic and acidic residues. Positions 427-465 (EKQEAAKVENPPAERHSSLHTSDVMQEKNSANGATTQVP) are disordered. A compositionally biased stretch (polar residues) spans 445 to 465 (LHTSDVMQEKNSANGATTQVP).

Belongs to the krueppel C2H2-type zinc-finger protein family. In terms of assembly, interacts with BRCA1. Interacts with RNF11. In terms of tissue distribution, widely expressed.

The protein resides in the nucleus. The protein localises to the nucleus matrix. Its function is as follows. Transcriptional repressor. Binds to a specific sequence, 5'-GGGxxxCAGxxxTTT-3', within GADD45 intron 3. In Homo sapiens (Human), this protein is Zinc finger protein 350 (ZNF350).